An 853-amino-acid chain; its full sequence is DNA mismatch repair protein MutS (853 aa).

ATP is bound at residue 614–621 (GPNMGGKS).

It belongs to the DNA mismatch repair MutS family.

Functionally, this protein is involved in the repair of mismatches in DNA. It is possible that it carries out the mismatch recognition step. This protein has a weak ATPase activity. The polypeptide is DNA mismatch repair protein MutS (Shigella boydii serotype 18 (strain CDC 3083-94 / BS512)).